A 631-amino-acid polypeptide reads, in one-letter code: Golgin subfamily A member 8A (631 aa).

Positions 1–20 (MLPVDGEERKSEGSDTEGDR) are enriched in basic and acidic residues. 4 disordered regions span residues 1–103 (MLPV…QEQA), 127–154 (KKQV…LEGQ), 426–447 (TSAE…ESSG), and 488–520 (PGDS…GAAG). Positions 78 to 92 (SLYLSPKSSSASSSL) are enriched in low complexity. Over residues 93–103 (HARQSPCQEQA) the composition is skewed to polar residues. Residues 110–468 (SIKISRLNDT…REHVEKLELG (359 aa)) adopt a coiled-coil conformation. Basic and acidic residues predominate over residues 128 to 152 (KQVEHQLEEEKKANNEKQKAERELE). Residues 497–510 (PGGGHHQAGPGQGG) show a composition bias toward gly residues. The tract at residues 519–631 (AGDGVAACGS…CWAWLPRRRR (113 aa)) is golgi-targeting domain.

Belongs to the GOLGA8 family.

It localises to the golgi apparatus. The protein resides in the golgi stack membrane. Functionally, may be involved in maintaining Golgi structure. This is Golgin subfamily A member 8A (GOLGA8A) from Homo sapiens (Human).